A 113-amino-acid polypeptide reads, in one-letter code: Putative pterin-4-alpha-carbinolamine dehydratase (113 aa).

It belongs to the pterin-4-alpha-carbinolamine dehydratase family.

The enzyme catalyses (4aS,6R)-4a-hydroxy-L-erythro-5,6,7,8-tetrahydrobiopterin = (6R)-L-erythro-6,7-dihydrobiopterin + H2O. The protein is Putative pterin-4-alpha-carbinolamine dehydratase of Nitrosococcus oceani (strain ATCC 19707 / BCRC 17464 / JCM 30415 / NCIMB 11848 / C-107).